Consider the following 208-residue polypeptide: Calcyphosin-like protein (208 aa).

4 consecutive EF-hand domains span residues 39–74, 75–110, 111–146, and 154–191; these read AGIKGLGRVFRIMDDNNNRTLDFKEFLKGLNDYAVV, MEKEEAEELFQRFDRDGSGTIDFNEFLLTLRPPMSR, ARKEVIMKAFRKLDKTGDGVITIEDLREVYNAKHHP, and TEEQVFRKFLDNFDSPYDKDGLVTPEEFMNYYAGVSAS. The Ca(2+) site is built by Asp-52, Asn-54, Asn-56, Thr-58, Glu-63, Asp-88, Asp-90, Ser-92, Thr-94, and Glu-99.

It is found in the cytoplasm. The chain is Calcyphosin-like protein (Capsl) from Mus musculus (Mouse).